The following is a 163-amino-acid chain: Urease accessory protein UreE (163 aa).

The interval 144–163 (QPEPGAYGGSSAGSHDGHHH) is disordered.

The protein belongs to the UreE family.

It localises to the cytoplasm. Functionally, involved in urease metallocenter assembly. Binds nickel. Probably functions as a nickel donor during metallocenter assembly. This is Urease accessory protein UreE from Aliivibrio fischeri (strain ATCC 700601 / ES114) (Vibrio fischeri).